The chain runs to 349 residues: tRNA pseudouridine synthase D (349 aa).

Phe27 is a binding site for substrate. Asp80 acts as the Nucleophile in catalysis. Residue Asn129 coordinates substrate. One can recognise a TRUD domain in the interval 155–303; sequence GVPNYFGAQR…VEAARRAMLL (149 aa). A substrate-binding site is contributed by Phe329.

Belongs to the pseudouridine synthase TruD family.

It carries out the reaction uridine(13) in tRNA = pseudouridine(13) in tRNA. Functionally, responsible for synthesis of pseudouridine from uracil-13 in transfer RNAs. This is tRNA pseudouridine synthase D from Escherichia coli O6:K15:H31 (strain 536 / UPEC).